Reading from the N-terminus, the 342-residue chain is Ribosomal RNA small subunit methyltransferase H (342 aa).

S-adenosyl-L-methionine is bound by residues 36–38 (GGH), Asp56, Phe82, Asp100, and Gln107. Positions 309 to 342 (ENRESGMGKGHGAAASRFPTPDSRFPTSPNGDAP) are disordered. Residues 333 to 342 (FPTSPNGDAP) are compositionally biased toward polar residues.

The protein belongs to the methyltransferase superfamily. RsmH family.

It localises to the cytoplasm. It carries out the reaction cytidine(1402) in 16S rRNA + S-adenosyl-L-methionine = N(4)-methylcytidine(1402) in 16S rRNA + S-adenosyl-L-homocysteine + H(+). In terms of biological role, specifically methylates the N4 position of cytidine in position 1402 (C1402) of 16S rRNA. This Xanthomonas campestris pv. campestris (strain B100) protein is Ribosomal RNA small subunit methyltransferase H.